The chain runs to 157 residues: Peptide methionine sulfoxide reductase MsrA (157 aa).

The active site involves Cys-10.

This sequence belongs to the MsrA Met sulfoxide reductase family.

The catalysed reaction is L-methionyl-[protein] + [thioredoxin]-disulfide + H2O = L-methionyl-(S)-S-oxide-[protein] + [thioredoxin]-dithiol. The enzyme catalyses [thioredoxin]-disulfide + L-methionine + H2O = L-methionine (S)-S-oxide + [thioredoxin]-dithiol. Its function is as follows. Has an important function as a repair enzyme for proteins that have been inactivated by oxidation. Catalyzes the reversible oxidation-reduction of methionine sulfoxide in proteins to methionine. In Clostridium botulinum (strain Okra / Type B1), this protein is Peptide methionine sulfoxide reductase MsrA.